Consider the following 591-residue polypeptide: Metalloendopeptidase OPG085 (591 aa).

H41 contributes to the Zn(2+) binding site. E44 is an active-site residue. Zn(2+)-binding residues include H45 and E112.

The protein belongs to the peptidase M44 family. It depends on Zn(2+) as a cofactor. Undergoes proteolytic processing during the course of infection. May be cleaved into 46 kDa and 22 kDa products (Potential).

It is found in the virion. Its function is as follows. Probably involved in maturation of some viral proteins by processing them preferentially at Ala-Gly-|-Ser/Thr/Lys motifs. Does not seem to be responsible for the cleavage of major core proteins. The protein is Metalloendopeptidase OPG085 (OPG085) of Monkeypox virus.